Here is a 1133-residue protein sequence, read N- to C-terminus: Early transcription factor large subunit homolog (1133 aa).

Residues 52–352 (KGGRAFFPCD…PNGQPLQRQQ (301 aa)) enclose the Helicase ATP-binding domain. 99–106 (WQTGTGKS) is an ATP binding site. The short motif at 281–284 (DEIH) is the DEAH box element. In terms of domain architecture, Helicase C-terminal spans 524-724 (MMKDILSIIR…EGDKALRKHA (201 aa)).

The protein belongs to the DEAD box helicase family. DEAH subfamily.

Its subcellular location is the virion. It carries out the reaction ATP + H2O = ADP + phosphate + H(+). Putative initation factor. The chain is Early transcription factor large subunit homolog from Ornithodoros (relapsing fever ticks).